We begin with the raw amino-acid sequence, 479 residues long: Cardiolipin synthase A (479 aa).

2 consecutive transmembrane segments (helical) span residues 8 to 28 (LLAYFIATLHFLGTLAAIHAV) and 38 to 58 (IAWALSLMFMPYLTLIPYLIF). 2 PLD phosphodiesterase domains span residues 218-245 (VNFRNHRKIVVVDGITGFVGGHNVGDEY) and 392-419 (TPGFLHQKVVLVDSEISAIGSANMDNRS). Active-site residues include histidine 223, lysine 225, aspartate 230, histidine 397, lysine 399, and aspartate 404.

Belongs to the phospholipase D family. Cardiolipin synthase subfamily. ClsA sub-subfamily.

The protein localises to the cell inner membrane. It catalyses the reaction 2 a 1,2-diacyl-sn-glycero-3-phospho-(1'-sn-glycerol) = a cardiolipin + glycerol. Catalyzes the reversible phosphatidyl group transfer from one phosphatidylglycerol molecule to another to form cardiolipin (CL) (diphosphatidylglycerol) and glycerol. This is Cardiolipin synthase A from Pseudomonas fluorescens (strain SBW25).